We begin with the raw amino-acid sequence, 179 residues long: MARLQQHYREKIAKDLTEKFGYKSPMQVPRLTKITLNMGVGEAVADKKVLDNAVADLTKIAGQKPVVTKSKKAIAGFKIRENQPIGCMVTLRGVQMYEFLDRFVTIALPRVRDFRGISGRAFDGRGNYNIGVKEQIIFPEIEYDKVDALRGLNISITTTAKTDEEAKALLAGFRFPFKN.

This sequence belongs to the universal ribosomal protein uL5 family. In terms of assembly, part of the 50S ribosomal subunit; part of the 5S rRNA/L5/L18/L25 subcomplex. Contacts the 5S rRNA and the P site tRNA. Forms a bridge to the 30S subunit in the 70S ribosome.

Functionally, this is one of the proteins that bind and probably mediate the attachment of the 5S RNA into the large ribosomal subunit, where it forms part of the central protuberance. In the 70S ribosome it contacts protein S13 of the 30S subunit (bridge B1b), connecting the 2 subunits; this bridge is implicated in subunit movement. Contacts the P site tRNA; the 5S rRNA and some of its associated proteins might help stabilize positioning of ribosome-bound tRNAs. This Variovorax paradoxus (strain S110) protein is Large ribosomal subunit protein uL5.